A 422-amino-acid chain; its full sequence is Lactoyl-CoA dehydratase subunit alpha (422 aa).

It belongs to the FldB/FldC dehydratase alpha/beta subunit family. As to quaternary structure, heterodimer of an alpha (LcdA) and a beta (LcdB) subunit. [4Fe-4S] cluster serves as cofactor. The cofactor is FMN. It depends on riboflavin as a cofactor. Requires Mg(2+) as cofactor.

It catalyses the reaction (R)-lactoyl-CoA = acryloyl-CoA + H2O. The catalysed reaction is (2R)-hydroxybutanoyl-CoA = (2E)-butenoyl-CoA + H2O. Activated by the LcdC protein. Its function is as follows. Involved in the acrylate pathway for the conversion of D-lactic acid to propionic acid. Catalyzes the reversible dehydration of Lactoyl-CoA and 2-hydroxybutyroyl-CoA to acryloyl-CoA and crotonyl-CoA, respectively. The protein is Lactoyl-CoA dehydratase subunit alpha (lcdA) of Anaerotignum propionicum (Clostridium propionicum).